The sequence spans 200 residues: Holliday junction branch migration complex subunit RuvA (200 aa).

The segment at 1-65 (MYEYIKGTLT…ETEHVLYGFS (65 aa)) is domain I. A domain II region spans residues 66–144 (SRAERECFRL…TLMPLYLEEP (79 aa)). Residues 145–149 (VVPSS) are flexible linker. The tract at residues 150–200 (TANSSFKEGIGALMNLGFSRLAADRMMTEAVKELSEEASVAELLPIALRKS) is domain III.

The protein belongs to the RuvA family. As to quaternary structure, homotetramer. Forms an RuvA(8)-RuvB(12)-Holliday junction (HJ) complex. HJ DNA is sandwiched between 2 RuvA tetramers; dsDNA enters through RuvA and exits via RuvB. An RuvB hexamer assembles on each DNA strand where it exits the tetramer. Each RuvB hexamer is contacted by two RuvA subunits (via domain III) on 2 adjacent RuvB subunits; this complex drives branch migration. In the full resolvosome a probable DNA-RuvA(4)-RuvB(12)-RuvC(2) complex forms which resolves the HJ.

Its subcellular location is the cytoplasm. Its function is as follows. The RuvA-RuvB-RuvC complex processes Holliday junction (HJ) DNA during genetic recombination and DNA repair, while the RuvA-RuvB complex plays an important role in the rescue of blocked DNA replication forks via replication fork reversal (RFR). RuvA specifically binds to HJ cruciform DNA, conferring on it an open structure. The RuvB hexamer acts as an ATP-dependent pump, pulling dsDNA into and through the RuvAB complex. HJ branch migration allows RuvC to scan DNA until it finds its consensus sequence, where it cleaves and resolves the cruciform DNA. This is Holliday junction branch migration complex subunit RuvA from Chlamydia trachomatis serovar D (strain ATCC VR-885 / DSM 19411 / UW-3/Cx).